The chain runs to 757 residues: Mitofusin-2 (757 aa).

The Cytoplasmic segment spans residues 1-604 (MSLLFSRCNS…TQEELMVSMV (604 aa)). A part of a helix bundle domain, formed by helices from N-terminal and C-terminal regions region spans residues 30–94 (KHFVTAKKKI…VRGISEVLAR (65 aa)). One can recognise a Dynamin-type G domain in the interval 93–342 (ARRHMKVAFF…VRMFEFQNFE (250 aa)). Residues 103 to 110 (GRTSNGKS) are G1 motif. 106–111 (SNGKST) is a binding site for GTP. Position 111 is a phosphothreonine; by PINK1 (Thr111). The G2 motif stretch occupies residues 129 to 130 (TT). A G3 motif region spans residues 199–202 (DSPG). 258-261 (NRWD) provides a ligand contact to GTP. A G4 motif region spans residues 258–261 (NRWD). A region of interest (G5 motif) is located at residue Glu288. Residues Ser305 and Lys307 each contribute to the GTP site. The segment at 359 to 385 (EQHTVRAKQIAEAVRLIMDSLHIAAQE) is part of a helix bundle domain, formed by helices from N-terminal and C-terminal regions. A coiled-coil region spans residues 406 to 434 (KQLELLAQDYKLRIKQITEEVERQVSTAM). Residue Ser442 is modified to Phosphoserine. Residues 605 to 625 (TGLASLTSRTSMGILVVGGVV) form a helical membrane-spanning segment. Position 626 (Trp626) is a topological domain, mitochondrial intermembrane. The helical transmembrane segment at 627–647 (KAVGWRLIALSFGLYGLLYVY) threads the bilayer. Residues 648–757 (ERLTWTTKAK…FTHQYLQPSR (110 aa)) lie on the Cytoplasmic side of the membrane. The stretch at 696–738 (FAHLCQQVDITRDNLEQEIAAMNKKVEALDSLQSRAKLLRNKA) forms a coiled coil. Positions 722-753 (EALDSLQSRAKLLRNKAGWLDSELNMFTHQYL) are part of a helix bundle domain, formed by helices from N-terminal and C-terminal regions.

This sequence belongs to the TRAFAC class dynamin-like GTPase superfamily. Dynamin/Fzo/YdjA family. Mitofusin subfamily. Forms homomultimers and heteromultimers with MFN1. Oligomerization is essential for mitochondrion fusion. Interacts with VAT1. Interacts with STOML2; may form heterooligomers. Interacts (phosphorylated) with PRKN. Interacts with EIF2AK3. Interacts with THG1L; THG1L probably functions as a guanyl-nucleotide exchange factor/GEF, activating MFN2. Post-translationally, phosphorylated by PINK1. In terms of processing, ubiquitinated by non-degradative ubiquitin by PRKN, promoting mitochondrial fusion; deubiquitination by USP30 inhibits mitochondrial fusion. Ubiquitinated by HUWE1 when dietary stearate (C18:0) levels are low; ubiquitination inhibits mitochondrial fusion. In terms of tissue distribution, ubiquitous. Expression is markedly reduced in ApoE-knockout mouse atherosclerotic arteries.

It is found in the mitochondrion outer membrane. It carries out the reaction GTP + H2O = GDP + phosphate + H(+). Its function is as follows. Mitochondrial outer membrane GTPase that mediates mitochondrial clustering and fusion. Mitochondria are highly dynamic organelles, and their morphology is determined by the equilibrium between mitochondrial fusion and fission events. Overexpression induces the formation of mitochondrial networks. Membrane clustering requires GTPase activity and may involve a major rearrangement of the coiled coil domains. Plays a central role in mitochondrial metabolism and may be associated with obesity and/or apoptosis processes. Plays an important role in the regulation of vascular smooth muscle cell proliferation. Involved in the clearance of damaged mitochondria via selective autophagy (mitophagy). Is required for PRKN recruitment to dysfunctional mitochondria. Involved in the control of unfolded protein response (UPR) upon ER stress including activation of apoptosis and autophagy during ER stress. Acts as an upstream regulator of EIF2AK3 and suppresses EIF2AK3 activation under basal conditions. The chain is Mitofusin-2 (Mfn2) from Mus musculus (Mouse).